We begin with the raw amino-acid sequence, 333 residues long: Sphingomyelinase C (333 aa).

Positions 1 to 27 (MKGKLLKGVLSLGVGLGALYSGTSAQA) are cleaved as a signal peptide. A disulfide bridge connects residues Cys150 and Cys186.

This sequence belongs to the neutral sphingomyelinase family. Requires Mg(2+) as cofactor.

It localises to the secreted. The enzyme catalyses a sphingomyelin + H2O = phosphocholine + an N-acylsphing-4-enine + H(+). With respect to regulation, activated by cobalt and manganese ions. Required, with sphingomyelinase, to effect target cell lysis (hemolysis). The protein is Sphingomyelinase C (sph) of Bacillus cereus.